A 665-amino-acid chain; its full sequence is Probable potassium transport system protein Kup (665 aa).

The segment covering 1–18 has biased composition (low complexity); it reads MASEAPHASAPDCAPASS. Positions 1 to 31 are disordered; the sequence is MASEAPHASAPDCAPASSDIPQQDGGSTNGH. 12 consecutive transmembrane segments (helical) span residues 40–60, 83–103, 131–151, 171–191, 202–222, 245–265, 281–301, 332–352, 380–400, 409–429, 435–455, and 462–482; these read FFALALGSVGVVFGDIGTSPL, VVSLALWALILIVTIKYVVFI, LVFVLGVAGAALFYGDAVITP, GVTNEVVLLIATVMLLGLFFI, LFGPVCAVWFGVMFSLGLMNL, GLTGFIVLGAVFLTVTGVEAL, WLFFVLPCLAMNYLGQGAFAL, LVLLAGAATVIASQAVITGAF, IFVPQLNTMLLLGVLAIMFTF, AYGLAVTGTMIVTTCMAFIVM, WSMPMALLFLVPFLALDITFL, and FFSGGWLPVLIGAALFTIMAT.

It belongs to the HAK/KUP transporter (TC 2.A.72) family.

It is found in the cell inner membrane. It catalyses the reaction K(+)(in) + H(+)(in) = K(+)(out) + H(+)(out). Its function is as follows. Transport of potassium into the cell. Likely operates as a K(+):H(+) symporter. The chain is Probable potassium transport system protein Kup from Caulobacter vibrioides (strain ATCC 19089 / CIP 103742 / CB 15) (Caulobacter crescentus).